Consider the following 316-residue polypeptide: tRNA dimethylallyltransferase (316 aa).

G23–S30 provides a ligand contact to ATP. T25–S30 serves as a coordination point for substrate. Residues D48 to Q51 form an interaction with substrate tRNA region.

This sequence belongs to the IPP transferase family. As to quaternary structure, monomer. The cofactor is Mg(2+).

It carries out the reaction adenosine(37) in tRNA + dimethylallyl diphosphate = N(6)-dimethylallyladenosine(37) in tRNA + diphosphate. Functionally, catalyzes the transfer of a dimethylallyl group onto the adenine at position 37 in tRNAs that read codons beginning with uridine, leading to the formation of N6-(dimethylallyl)adenosine (i(6)A). This Rhodopseudomonas palustris (strain BisB18) protein is tRNA dimethylallyltransferase.